The sequence spans 202 residues: Putative transmembrane protein ORF202 (202 aa).

Transmembrane regions (helical) follow at residues 13–33, 40–60, 87–107, 156–176, and 177–197; these read AIAFGLAYSILEVNVPLFHYI, VFYLIIFAIANMTLPLSLFLG, YYPVIDGIPIADVIEVIISVF, YGALTLVLVSVLAILSSHSLS, and LTAFATLSLIVGTGIFVDLWA.

The protein resides in the host membrane. The polypeptide is Putative transmembrane protein ORF202 (Acidianus filamentous virus 2 (isolate Italy/Pozzuoli) (AFV-2)).